The following is a 437-amino-acid chain: C-terminal-binding protein 2 (437 aa).

Residues S103, 183-188 (IGLGRI), D207, 240-246 (CNLNEHN), 267-269 (TAR), and D293 each bind NAD(+). R269 is a catalytic residue. E298 is a catalytic residue. The Proton donor role is filled by H318. Residue 318 to 321 (HTAW) participates in NAD(+) binding. The segment at 410–437 (PLIPSVSHTPSPGQTTKPDPDREIPTDQ) is disordered. Polar residues predominate over residues 415–426 (VSHTPSPGQTTK). Residues 427–437 (PDPDREIPTDQ) show a composition bias toward basic and acidic residues.

This sequence belongs to the D-isomer specific 2-hydroxyacid dehydrogenase family. Interacts with the C-terminus of tcf7l1-a via the consensus motifs P-X-[DNS]-L-[STVA].

It is found in the nucleus. Its function is as follows. Corepressor targeting diverse transcription regulators. In Xenopus laevis (African clawed frog), this protein is C-terminal-binding protein 2 (ctbp2).